Consider the following 520-residue polypeptide: Ribonuclease Y (520 aa).

A helical membrane pass occupies residues 3-23 (IELAIIFIVLAAGAGFLIGNL). The 64-residue stretch at 210-273 (TVSVVALPSD…EVAKIALEKL (64 aa)) folds into the KH domain. The HD domain occupies 336 to 429 (VYQHSLEVAF…VQAADALSGA (94 aa)).

It belongs to the RNase Y family.

It localises to the cell membrane. Functionally, endoribonuclease that initiates mRNA decay. The polypeptide is Ribonuclease Y (Geobacter sulfurreducens (strain ATCC 51573 / DSM 12127 / PCA)).